The sequence spans 20 residues: Pregnancy-associated glycoprotein 57 (20 aa).

Belongs to the peptidase A1 family. In terms of processing, glycosylated.

Its subcellular location is the secreted. The polypeptide is Pregnancy-associated glycoprotein 57 (Ovis aries (Sheep)).